The sequence spans 168 residues: CS3 fimbrial subunit A (168 aa).

The signal sequence occupies residues 1 to 22 (MLKIKYLLIGLSLSAMSSYSLA).

A longer minor form, starting at amino acid 15, has been detected by amino acid sequencing. This is probably due to alternative processing of the signal peptide.

It localises to the fimbrium. Its function is as follows. Fimbriae (also called pili), polar filaments radiating from the surface of the bacterium to a length of 0.5-1.5 micrometers and numbering 100-300 per cell, enable bacteria to colonize the epithelium of specific host organs. The chain is CS3 fimbrial subunit A from Escherichia coli.